The sequence spans 417 residues: Serine hydroxymethyltransferase 1 (417 aa).

(6S)-5,6,7,8-tetrahydrofolate is bound by residues L121 and 125-127 (GHL). Residue K230 is modified to N6-(pyridoxal phosphate)lysine. Residue 355–357 (SPF) coordinates (6S)-5,6,7,8-tetrahydrofolate.

It belongs to the SHMT family. In terms of assembly, homodimer. Pyridoxal 5'-phosphate is required as a cofactor.

The protein localises to the cytoplasm. The catalysed reaction is (6R)-5,10-methylene-5,6,7,8-tetrahydrofolate + glycine + H2O = (6S)-5,6,7,8-tetrahydrofolate + L-serine. The protein operates within one-carbon metabolism; tetrahydrofolate interconversion. Its pathway is amino-acid biosynthesis; glycine biosynthesis; glycine from L-serine: step 1/1. Functionally, catalyzes the reversible interconversion of serine and glycine with tetrahydrofolate (THF) serving as the one-carbon carrier. This reaction serves as the major source of one-carbon groups required for the biosynthesis of purines, thymidylate, methionine, and other important biomolecules. Also exhibits THF-independent aldolase activity toward beta-hydroxyamino acids, producing glycine and aldehydes, via a retro-aldol mechanism. The sequence is that of Serine hydroxymethyltransferase 1 from Pseudomonas syringae pv. tomato (strain ATCC BAA-871 / DC3000).